The following is a 1289-amino-acid chain: MDTEFANANHPLHFLHRLLPAVGPGLLIAIGYVDPGKWAATVEGGARFGFDLVLPMLLFNFVAILCQYLSARIGVITRKDLAQICNDEYDKWTCMFLGVQAALSVIALDLTMILGIAHGLNLLFGMDLSTCVSLAAAEAILFPFFATLMERCKASFLCTCIAGFILLLYFFGVLISQPGIPLSINGTRTKLSEESVFALMSLLGASIMPHNFFLHSAIVLQHQGPPNISRDALCLNHFFAILCIFSGIYLVNFVLMNSAANVFHSTGLVLLTFPDAMSLMEQVFRSPVAPFGFSLILFFANQITAFSWNLGGQVVLHNFLRLDIPNWLQRATFRIIAVVPALYCVWTSGVEGIYQLLILTQVMVALLLPSSVIPLFHIASSRQVMGVYKISPFLEFVALISFMGMLGIKIIFVVEMVFGDSDWVGTLRWSTVSGSSTSYIVLLITACSSFCLMLWLAATPLKSATRLDAQVCNWDVQNAVSEPSTLIEEEFLTENICTGEELIERQEQLPEPGKSFESYSNITVANADPDLPETIMESDQELHLTTIKEKHSEVAFSSPQTFYEETSPTTESASLSASVNLVPDAELLVAKKAKIESMDPVEKTLDIEGELHTEKEDDEGDNWEPEDSSKGVPGSTLSLTSDGPGSFRSLSGKSDAGGNGAGSLSRLAGLGRAARRQLAAVLDEFWGQLYDFHGQITQEAKTKKLDALGVDLKLASSQLKVDTAGKESSGYFSLVGGRASDSLINSSLCDSPKQLRVQSNIDSSYGVQRGPSSLWSNHMQLLDAYVQGPSQSIADSSERRYSGVRTPPSSDGWDNQPATVHGYQIASIANRIAKDRGFSSLNGQMESPAPISPSLGPRNYRDPLTVSMGKNLQNGLSSSQASGFQNLAVTRNSPLQSERPYHDVYSGSADDTGMSANTKKYHSLPDISGLAGPYRDLYMSEKNAQWDKSAGFGSSVGRSAYEQSYYSNTGSGAGGPLSFNGLSKGHGDAFSLHMTPDPGSLWSKQPFEQFGVADKIRAVGSGLGNRSNSINREVTSPVDSEAQLLRSFRHCIVKLLKLEGSDWLFRQNDGADEDLIDCVAARERYLYEAETREMNHVDHMGGSTYLYSDRKSGSALRNDDASITNIMVSSVPHCGEGCVWRSDLIISFGVWCIHRILDLSLMESRPELWGKYTYVLNRLQGIIELAFSKPRTPMSPCFCLQIPASHQHRSSPPASNGMLPPASKPGRGKCTTAATLLDLIKDVEIAISCRKGRSGTAAGDVAFPKGKENLASVLKRYKRRLSNKLIGSK.

5 helical membrane-spanning segments follow: residues 18–38 (LLPA…PGKW), 48–68 (FGFD…LCQY), 96–116 (FLGV…ILGI), 128–148 (LSTC…FATL), and 155–175 (SFLC…GVLI). A glycan (N-linked (GlcNAc...) asparagine) is linked at Asn185. Residues 199–219 (LMSLLGASIMPHNFFLHSAIV) traverse the membrane as a helical segment. Asn227 carries N-linked (GlcNAc...) asparagine glycosylation. Transmembrane regions (helical) follow at residues 235–255 (LNHF…NFVL), 260–280 (ANVF…MSLM), 288–308 (VAPF…AFSW), 335–355 (IIAV…GIYQ), 356–376 (LLIL…IPLF), 393–413 (FLEF…IIFV), and 439–459 (YIVL…LAAT). Asn521 carries an N-linked (GlcNAc...) asparagine glycan. A disordered region spans residues 611–659 (LHTEKEDDEGDNWEPEDSSKGVPGSTLSLTSDGPGSFRSLSGKSDAGGN). Over residues 616-626 (EDDEGDNWEPE) the composition is skewed to acidic residues. Polar residues predominate over residues 635 to 652 (STLSLTSDGPGSFRSLSG). Ser646 and Ser663 each carry phosphoserine. Asn745 is a glycosylation site (N-linked (GlcNAc...) asparagine). Residues 792–816 (SIADSSERRYSGVRTPPSSDGWDNQ) are disordered. Polar residues predominate over residues 807 to 816 (PPSSDGWDNQ). Thr819 bears the Phosphothreonine mark. Ser923 carries the post-translational modification Phosphoserine. Asn1025 carries N-linked (GlcNAc...) asparagine glycosylation. The interval 1208–1227 (HRSSPPASNGMLPPASKPGR) is disordered. The Nuclear localization signal signature appears at 1274-1281 (LKRYKRRL).

This sequence belongs to the NRAMP (TC 2.A.55) family.

It localises to the endoplasmic reticulum membrane. Its subcellular location is the nucleus. The protein localises to the cytoplasm. Central factor in signaling pathways regulated by ethylene (ET) and involved in various processes including development, plant defense, senescence, nucleotide sugar flux, and tropisms. Its function is as follows. Trafficking signal inducing ethylene response. The nuclear localization is both necessary and sufficient to activate EIN3-mediated transcription and ethylene responses. The sequence is that of Ethylene-insensitive protein 2.1 from Populus trichocarpa (Western balsam poplar).